The following is a 305-amino-acid chain: Aspartate carbamoyltransferase catalytic subunit (305 aa).

Residues Arg56 and Thr57 each contribute to the carbamoyl phosphate site. Lys85 contacts L-aspartate. Carbamoyl phosphate is bound by residues Arg106, His134, and Gln137. L-aspartate contacts are provided by Arg167 and Arg227. Carbamoyl phosphate contacts are provided by Leu266 and Pro267.

It belongs to the aspartate/ornithine carbamoyltransferase superfamily. ATCase family. As to quaternary structure, heterooligomer of catalytic and regulatory chains.

The catalysed reaction is carbamoyl phosphate + L-aspartate = N-carbamoyl-L-aspartate + phosphate + H(+). It functions in the pathway pyrimidine metabolism; UMP biosynthesis via de novo pathway; (S)-dihydroorotate from bicarbonate: step 2/3. Functionally, catalyzes the condensation of carbamoyl phosphate and aspartate to form carbamoyl aspartate and inorganic phosphate, the committed step in the de novo pyrimidine nucleotide biosynthesis pathway. The sequence is that of Aspartate carbamoyltransferase catalytic subunit from Thermoplasma acidophilum (strain ATCC 25905 / DSM 1728 / JCM 9062 / NBRC 15155 / AMRC-C165).